A 485-amino-acid chain; its full sequence is 4-alpha-glucanotransferase (485 aa).

This sequence belongs to the disproportionating enzyme family.

The protein resides in the cytoplasm. It catalyses the reaction Transfers a segment of a (1-&gt;4)-alpha-D-glucan to a new position in an acceptor, which may be glucose or a (1-&gt;4)-alpha-D-glucan.. The protein is 4-alpha-glucanotransferase (malQ) of Aquifex aeolicus (strain VF5).